We begin with the raw amino-acid sequence, 59 residues long: Large ribosomal subunit protein uL30 (59 aa).

The protein belongs to the universal ribosomal protein uL30 family. As to quaternary structure, part of the 50S ribosomal subunit.

The sequence is that of Large ribosomal subunit protein uL30 from Mycolicibacterium vanbaalenii (strain DSM 7251 / JCM 13017 / BCRC 16820 / KCTC 9966 / NRRL B-24157 / PYR-1) (Mycobacterium vanbaalenii).